We begin with the raw amino-acid sequence, 839 residues long: Taste receptor type 1 member 2 (839 aa).

The N-terminal stretch at methionine 1–alanine 19 is a signal peptide. Over glutamate 20–threonine 566 the chain is Extracellular. Residues asparagine 84, asparagine 127, asparagine 248, asparagine 292, asparagine 312, asparagine 368, asparagine 428, asparagine 487, and asparagine 527 are each glycosylated (N-linked (GlcNAc...) asparagine). The chain crosses the membrane as a helical span at residues isoleucine 567–phenylalanine 587. Topologically, residues tryptophan 588–proline 602 are cytoplasmic. A helical membrane pass occupies residues methionine 603–glycine 623. Over proline 624–alanine 635 the chain is Extracellular. A helical membrane pass occupies residues leucine 636 to valine 656. Over cysteine 657–serine 681 the chain is Cytoplasmic. A helical membrane pass occupies residues methionine 682–leucine 702. Over asparagine 703–serine 727 the chain is Extracellular. Residues leucine 728–methionine 748 form a helical membrane-spanning segment. Residues glycine 749 to lysine 760 are Cytoplasmic-facing. A helical transmembrane segment spans residues phenylalanine 761 to serine 781. Residues alanine 782–asparagine 784 lie on the Extracellular side of the membrane. The helical transmembrane segment at glycine 785 to leucine 805 threads the bilayer. Over glycine 806–aspartate 839 the chain is Cytoplasmic.

Belongs to the G-protein coupled receptor 3 family. TAS1R subfamily. In terms of assembly, forms heterodimers with TAS1R3.

The protein resides in the cell membrane. Putative taste receptor. TAS1R2/TAS1R3 recognizes diverse natural and synthetic sweeteners. This chain is Taste receptor type 1 member 2 (TAS1R2), found in Macaca mulatta (Rhesus macaque).